A 734-amino-acid polypeptide reads, in one-letter code: Photosystem I P700 chlorophyll a apoprotein A2 (734 aa).

8 helical membrane-spanning segments follow: residues Ile-46–Ala-69, Leu-135–Gln-158, Leu-175–Ile-199, Ile-273–Tyr-291, Leu-330–Tyr-353, Ala-369–Ile-395, Ala-417–His-439, and Phe-517–Val-535. Cys-559 and Cys-568 together coordinate [4Fe-4S] cluster. Helical transmembrane passes span Ala-575–Trp-596 and Leu-643–Ile-665. The chlorophyll a site is built by His-654, Met-662, and Tyr-670. Trp-671 contacts phylloquinone. The helical transmembrane segment at Leu-707–Ala-727 threads the bilayer.

This sequence belongs to the PsaA/PsaB family. As to quaternary structure, the PsaA/B heterodimer binds the P700 chlorophyll special pair and subsequent electron acceptors. PSI consists of a core antenna complex that captures photons, and an electron transfer chain that converts photonic excitation into a charge separation. The eukaryotic PSI reaction center is composed of at least 11 subunits. P700 is a chlorophyll a/chlorophyll a' dimer, A0 is one or more chlorophyll a, A1 is one or both phylloquinones and FX is a shared 4Fe-4S iron-sulfur center. serves as cofactor.

It localises to the plastid. The protein localises to the chloroplast thylakoid membrane. The catalysed reaction is reduced [plastocyanin] + hnu + oxidized [2Fe-2S]-[ferredoxin] = oxidized [plastocyanin] + reduced [2Fe-2S]-[ferredoxin]. PsaA and PsaB bind P700, the primary electron donor of photosystem I (PSI), as well as the electron acceptors A0, A1 and FX. PSI is a plastocyanin/cytochrome c6-ferredoxin oxidoreductase, converting photonic excitation into a charge separation, which transfers an electron from the donor P700 chlorophyll pair to the spectroscopically characterized acceptors A0, A1, FX, FA and FB in turn. Oxidized P700 is reduced on the lumenal side of the thylakoid membrane by plastocyanin or cytochrome c6. This Oltmannsiellopsis viridis (Marine flagellate) protein is Photosystem I P700 chlorophyll a apoprotein A2.